We begin with the raw amino-acid sequence, 382 residues long: Processive diacylglycerol beta-glucosyltransferase (382 aa).

This sequence belongs to the glycosyltransferase 28 family. UgtP subfamily.

It is found in the cell membrane. It catalyses the reaction a 1,2-diacyl-3-O-(beta-D-glucopyranosyl)-sn-glycerol + UDP-alpha-D-glucose = a 1,2-diacyl-3-O-(beta-D-Glc-(1-&gt;6)-beta-D-Glc)-sn-glycerol + UDP + H(+). The catalysed reaction is a 1,2-diacyl-3-O-(beta-D-Glc-(1-&gt;6)-beta-D-Glc)-sn-glycerol + UDP-alpha-D-glucose = a 1,2-diacyl-3-O-(beta-D-Glc-(1-&gt;6)-beta-D-Glc-(1-&gt;6)-beta-D-Glc)-sn-glycerol + UDP + H(+). It carries out the reaction a 1,2-diacyl-sn-glycerol + UDP-alpha-D-glucose = a 1,2-diacyl-3-O-(beta-D-glucopyranosyl)-sn-glycerol + UDP + H(+). The protein operates within glycolipid metabolism; diglucosyl-diacylglycerol biosynthesis. Processive glucosyltransferase involved in the biosynthesis of both the bilayer- and non-bilayer-forming membrane glucolipids. Is able to successively transfer up to three glucosyl residues to diacylglycerol (DAG), thereby catalyzing the formation of beta-monoglucosyl-DAG (3-O-(beta-D-glucopyranosyl)-1,2-diacyl-sn-glycerol), beta-diglucosyl-DAG (3-O-(beta-D-glucopyranosyl-beta-(1-&gt;6)-D-glucopyranosyl)-1,2-diacyl-sn-glycerol) and beta-triglucosyl-DAG (3-O-(beta-D-glucopyranosyl-beta-(1-&gt;6)-D-glucopyranosyl-beta-(1-&gt;6)-D-glucopyranosyl)-1,2-diacyl-sn-glycerol). Beta-diglucosyl-DAG is the predominant glycolipid found in Bacillales and is also used as a membrane anchor for lipoteichoic acid (LTA). Also seems to be able to form beta-tetraglucosyl-DAG, although this glycolipid has not been found in B.subtilis membrane. UgtP can only use UDP-glucose as sugar donor. The sequence is that of Processive diacylglycerol beta-glucosyltransferase from Bacillus subtilis (strain 168).